The sequence spans 153 residues: Putative riboflavin kinase (153 aa).

Mg(2+)-binding residues include Thr-28 and Asn-30. The active-site Nucleophile is the Glu-80.

As to quaternary structure, monomer. Zn(2+) serves as cofactor. It depends on Mg(2+) as a cofactor.

It is found in the cytoplasm. It catalyses the reaction riboflavin + ATP = FMN + ADP + H(+). It functions in the pathway cofactor biosynthesis; FMN biosynthesis; FMN from riboflavin (ATP route): step 1/1. Functionally, catalyzes the phosphorylation of riboflavin (vitamin B2) to form flavin-mononucleotide (FMN). This chain is Putative riboflavin kinase, found in Drosophila melanogaster (Fruit fly).